The sequence spans 358 residues: MIEQQKRKGPELPLVPVKRPRHELLLGAAGAGPGAGPQQATPGALLQAGPPRCSSLQAPIMLLSGHEGEVYCCKFHPNGSTLASAGFDRLILLWNVYGDCDNYATLKGHSGAVMELHYNTDGSMLFSASTDKTVAVWDSETGERVKRLKGHTSFVNSCYPARRGPQLVCTGSDDGTVKLWDIRKKAAVQTFQNTYQVLAVTFNDTSDQIISGGIDNDIKVWDLRQNKLTYTMRGHADSVTGLSLSSEGSYLLSNAMDNTVRVWDVRPFAPKERCVKIFQGNVHNFEKNLLRCSWSPDGSKIAAGSADRFVYVWDTTSRRVLYKLPGHAGSINEVAFHPDEPIILSASSDKRLYMGEIQ.

Residue lysine 18 forms a Glycyl lysine isopeptide (Lys-Gly) (interchain with G-Cter in SUMO2) linkage. Arginine 21 carries the asymmetric dimethylarginine modification. WD repeat units follow at residues 65-104 (GHEG…DNYA), 108-147 (GHSG…RVKR), 150-190 (GHTS…AVQT), 192-231 (QNTY…LTYT), 234-273 (GHAD…PKER), 284-323 (NFEK…VLYK), and 326-358 (GHAG…GEIQ). A Glycyl lysine isopeptide (Lys-Gly) (interchain with G-Cter in SUMO2) cross-link involves residue lysine 271.

As to quaternary structure, component of the pre-catalytic and catalytic spliceosome complexes. Component of the postcatalytic spliceosome P complex. Part of the U5 snRNP complex. Interacts with PRPF8. Component of the U4/U6-U5 tri-snRNP complex composed of the U4, U6 and U5 snRNAs and at least PRPF3, PRPF4, PRPF6, PRPF8, PRPF31, SNRNP200, TXNL4A, WDR57, SNRNP40, DDX23, CD2BP2, PPIH, SNU13, EFTUD2, SART1 and USP39. Component of the minor spliceosome, which splices U12-type introns.

The protein localises to the nucleus. Its function is as follows. Required for pre-mRNA splicing as component of the activated spliceosome. Component of the U5 small nuclear ribonucleoprotein (snRNP) complex and the U4/U6-U5 tri-snRNP complex, building blocks of the spliceosome. As a component of the minor spliceosome, involved in the splicing of U12-type introns in pre-mRNAs. In Mus musculus (Mouse), this protein is U5 small nuclear ribonucleoprotein 40 kDa protein (Snrnp40).